A 280-amino-acid polypeptide reads, in one-letter code: 3-phenylpropionate-dihydrodiol/cinnamic acid-dihydrodiol dehydrogenase (280 aa).

S143 contacts substrate. The Proton acceptor role is filled by Y156.

This sequence belongs to the short-chain dehydrogenases/reductases (SDR) family.

The enzyme catalyses 3-(cis-5,6-dihydroxycyclohexa-1,3-dien-1-yl)propanoate + NAD(+) = 3-(2,3-dihydroxyphenyl)propanoate + NADH + H(+). It carries out the reaction (2E)-3-(cis-5,6-dihydroxycyclohexa-1,3-dien-1-yl)prop-2-enoate + NAD(+) = (2E)-3-(2,3-dihydroxyphenyl)prop-2-enoate + NADH + H(+). It functions in the pathway aromatic compound metabolism; 3-phenylpropanoate degradation. Converts 3-phenylpropionate-dihydrodiol (PP-dihydrodiol) and cinnamic acid-dihydrodiol (CI-dihydrodiol) into 3-(2,3-dihydroxylphenyl)propanoic acid (DHPP) and 2,3-dihydroxicinnamic acid (DHCI), respectively. This Photorhabdus laumondii subsp. laumondii (strain DSM 15139 / CIP 105565 / TT01) (Photorhabdus luminescens subsp. laumondii) protein is 3-phenylpropionate-dihydrodiol/cinnamic acid-dihydrodiol dehydrogenase.